The primary structure comprises 128 residues: Group 2 truncated hemoglobin GlbO (128 aa).

Positions 23 to 36 form a cross-link, isodityrosine (Tyr-Tyr); that stretch reads YAQVAEDEVLRRVY. Tyr36 bears the 3',4'-dihydroxyphenylalanine mark. His75 lines the heme pocket.

It belongs to the truncated hemoglobin family. Group II subfamily. In terms of assembly, homododecamer. The cofactor is heme. Post-translationally, contains L-DOPA (3',4'-dihydroxyphenylalanine).

This Mycobacterium bovis (strain ATCC BAA-935 / AF2122/97) protein is Group 2 truncated hemoglobin GlbO (glbO).